A 158-amino-acid polypeptide reads, in one-letter code: Cell number regulator 11 (158 aa).

A run of 2 helical transmembrane segments spans residues 49-67 (FGDL…VTFG) and 78-94 (TCCM…TIGW).

It belongs to the cornifelin family.

The protein resides in the membrane. This Zea mays (Maize) protein is Cell number regulator 11 (CNR11).